Here is a 188-residue protein sequence, read N- to C-terminus: dTTP/UTP pyrophosphatase (188 aa).

D70 serves as the catalytic Proton acceptor.

Belongs to the Maf family. YhdE subfamily. It depends on a divalent metal cation as a cofactor.

It is found in the cytoplasm. The catalysed reaction is dTTP + H2O = dTMP + diphosphate + H(+). It catalyses the reaction UTP + H2O = UMP + diphosphate + H(+). Functionally, nucleoside triphosphate pyrophosphatase that hydrolyzes dTTP and UTP. May have a dual role in cell division arrest and in preventing the incorporation of modified nucleotides into cellular nucleic acids. This is dTTP/UTP pyrophosphatase from Clostridium beijerinckii (strain ATCC 51743 / NCIMB 8052) (Clostridium acetobutylicum).